The following is a 55-amino-acid chain: MAKGSREKIKLESSASTGHFYTTSKNKRTKPEKMEIMKFDPTIRKHVAYKETKLK.

Over residues 1–11 (MAKGSREKIKL) the composition is skewed to basic and acidic residues. Positions 1-32 (MAKGSREKIKLESSASTGHFYTTSKNKRTKPE) are disordered. Positions 13–24 (SSASTGHFYTTS) are enriched in polar residues.

This sequence belongs to the bacterial ribosomal protein bL33 family.

This is Large ribosomal subunit protein bL33 from Polynucleobacter necessarius subsp. necessarius (strain STIR1).